The sequence spans 163 residues: MKSRRSRCRRSFTTLVRREEERLARWALELARRGLTGEARRVAEQLFQLAASTRVRPPRRVKRLFCKNCRTPLIPGLTARVRLRSQGGMSYTVVTCLSCGWIHRYPYRKGPRGGAPISPPAAEYGSGGRDSGEREDKGPQGPPRQGGRDNRQGGGHQGGPKGD.

Zn(2+) contacts are provided by Cys66, Cys69, Cys96, and Cys99. The tract at residues Gly110–Asp163 is disordered. Gly residues predominate over residues Gln152 to Asp163.

This sequence belongs to the eukaryotic/archaeal RNase P protein component 4 family. As to quaternary structure, consists of a catalytic RNA component and at least 4-5 protein subunits. The cofactor is Zn(2+).

The protein localises to the cytoplasm. It catalyses the reaction Endonucleolytic cleavage of RNA, removing 5'-extranucleotides from tRNA precursor.. Functionally, part of ribonuclease P, a protein complex that generates mature tRNA molecules by cleaving their 5'-ends. The protein is Ribonuclease P protein component 4 of Aeropyrum pernix (strain ATCC 700893 / DSM 11879 / JCM 9820 / NBRC 100138 / K1).